The primary structure comprises 492 residues: MEFSVLLLLALTTGFLIFLVSQSQPKTHGHFPPGPRPLPFLGNLLQMDRRGLLSSFIQLQEKYGDVFTVHLGPRPVVMLCGTDTIREALVNQAEAFSGRGTVAVLDPIVQGYGVIFSSGERWKTLRRFSLATMRDFGMGKRSVEERIKEEAQCLVEELKKYKGAPLNPTFYFQCIVANIICSIVFGERFDYKDHQFLHLLNLIYQTFSLMSSLSSQVFELFSAILKYFPGAHRQISKNLQEILDYIGHSVEKHRATLDPSAPRDFIDTYLLRMEKEKSNHHTEFHHQNLVISVLSLFFAGTETTSTTLRYSFLIMLKYPHVAEKVQKEIDQVIGSHRLPTLDDRTKMPYTDAVIHEIQRFTDLAPIGLPHKVTKDTLFRGYLIPKNTEVYPILSSALHDPRYFEQPDSFNPEHFLDANGALKTNEAFMPFSTGKRICLGEGIARNELFLFFTTILQNFSLASPVAPENIDLIPNNSGATKTPPQYQIHFLSR.

The residue at position 129 (Ser-129) is a Phosphoserine; by PKA. Cys-437 lines the heme pocket.

This sequence belongs to the cytochrome P450 family. Heme is required as a cofactor. In terms of tissue distribution, expressed only in differentiated keratinocytes in skin.

The protein resides in the endoplasmic reticulum membrane. It is found in the microsome membrane. The catalysed reaction is an organic molecule + reduced [NADPH--hemoprotein reductase] + O2 = an alcohol + oxidized [NADPH--hemoprotein reductase] + H2O + H(+). Cytochromes P450 are a group of heme-thiolate monooxygenases. In liver microsomes, this enzyme is involved in an NADPH-dependent electron transport pathway. It oxidizes a variety of structurally unrelated compounds, including steroids, fatty acids, and xenobiotics. In Mus musculus (Mouse), this protein is Cytochrome P450 2B19 (Cyp2b19).